We begin with the raw amino-acid sequence, 347 residues long: Ataxin-7-like protein 3 (347 aa).

The SGF11-type zinc finger occupies cysteine 84–cysteine 105. A compositionally biased stretch (low complexity) spans alanine 116–asparagine 125. A disordered region spans residues alanine 116–lysine 184. Phosphoserine occurs at positions 129 and 131. Residues aspartate 132 to aspartate 141 are compositionally biased toward acidic residues. Residues leucine 196–threonine 263 form the SCA7 domain. Over residues aspartate 275–serine 288 the composition is skewed to low complexity. The segment at aspartate 275–asparagine 347 is disordered. Serine 278, serine 281, and serine 326 each carry phosphoserine.

This sequence belongs to the SGF11 family. In terms of assembly, component of some SAGA transcription coactivator-HAT complexes, at least composed of ATXN7, ATXN7L3, ENY2, GCN5L2, SUPT3H, TAF10, TRRAP and USP22. Within the SAGA complex, ENY2, ATXN7, ATXN7L3, and USP22 form an additional subcomplex of SAGA called the DUB module (deubiquitination module). Interacts directly with ENY2 and USP22.

Its subcellular location is the nucleus. Component of the transcription regulatory histone acetylation (HAT) complex SAGA, a multiprotein complex that activates transcription by remodeling chromatin and mediating histone acetylation and deubiquitination. Within the SAGA complex, participates in a subcomplex that specifically deubiquitinates both histones H2A and H2B. The SAGA complex is recruited to specific gene promoters by activators such as MYC, where it is required for transcription. Required for nuclear receptor-mediated transactivation. Within the complex, it is required to recruit USP22 and ENY2 into the SAGA complex. Regulates H2B monoubiquitination (H2Bub1) levels. Affects subcellular distribution of ENY2, USP22 and ATXN7L3B. The protein is Ataxin-7-like protein 3 of Homo sapiens (Human).